A 284-amino-acid chain; its full sequence is 4-diphosphocytidyl-2-C-methyl-D-erythritol kinase (284 aa).

The active site involves Lys-14. An ATP-binding site is contributed by 98 to 108; it reads PMGGGLGGGSS. Asp-140 is a catalytic residue.

Belongs to the GHMP kinase family. IspE subfamily.

It catalyses the reaction 4-CDP-2-C-methyl-D-erythritol + ATP = 4-CDP-2-C-methyl-D-erythritol 2-phosphate + ADP + H(+). The protein operates within isoprenoid biosynthesis; isopentenyl diphosphate biosynthesis via DXP pathway; isopentenyl diphosphate from 1-deoxy-D-xylulose 5-phosphate: step 3/6. In terms of biological role, catalyzes the phosphorylation of the position 2 hydroxy group of 4-diphosphocytidyl-2C-methyl-D-erythritol. This chain is 4-diphosphocytidyl-2-C-methyl-D-erythritol kinase, found in Shewanella sp. (strain MR-7).